The chain runs to 85 residues: Large ribosomal subunit protein bL27 (85 aa).

The interval 1-20 (MAHKKGGGTTRNGRDSESKR) is disordered.

It belongs to the bacterial ribosomal protein bL27 family.

The protein is Large ribosomal subunit protein bL27 of Herminiimonas arsenicoxydans.